The primary structure comprises 466 residues: 23S rRNA (uracil(1939)-C(5))-methyltransferase RlmD (466 aa).

The TRAM domain maps to 1 to 54 (MVDVLNIESLDLEARGIAHRDGKVLFVEGALPGERVTVQTVRRKPSYEIAKVEE). [4Fe-4S] cluster contacts are provided by Cys67, Cys73, Cys76, and Cys155. 6 residues coordinate S-adenosyl-L-methionine: Gln264, Phe293, Asn298, Glu314, Asn342, and Asp363. Cys393 functions as the Nucleophile in the catalytic mechanism.

The protein belongs to the class I-like SAM-binding methyltransferase superfamily. RNA M5U methyltransferase family. RlmD subfamily.

The catalysed reaction is uridine(1939) in 23S rRNA + S-adenosyl-L-methionine = 5-methyluridine(1939) in 23S rRNA + S-adenosyl-L-homocysteine + H(+). In terms of biological role, catalyzes the formation of 5-methyl-uridine at position 1939 (m5U1939) in 23S rRNA. In Bordetella bronchiseptica (strain ATCC BAA-588 / NCTC 13252 / RB50) (Alcaligenes bronchisepticus), this protein is 23S rRNA (uracil(1939)-C(5))-methyltransferase RlmD.